Reading from the N-terminus, the 159-residue chain is Ribosomal RNA large subunit methyltransferase H (159 aa).

S-adenosyl-L-methionine-binding residues include Leu76 and Gly108.

It belongs to the RNA methyltransferase RlmH family. Homodimer.

It localises to the cytoplasm. It catalyses the reaction pseudouridine(1915) in 23S rRNA + S-adenosyl-L-methionine = N(3)-methylpseudouridine(1915) in 23S rRNA + S-adenosyl-L-homocysteine + H(+). Functionally, specifically methylates the pseudouridine at position 1915 (m3Psi1915) in 23S rRNA. The protein is Ribosomal RNA large subunit methyltransferase H of Pediococcus pentosaceus (strain ATCC 25745 / CCUG 21536 / LMG 10740 / 183-1w).